A 347-amino-acid chain; its full sequence is Methionine import ATP-binding protein MetN (347 aa).

The 240-residue stretch at 2–241 (IKLEGVSKTY…PATRLGRDFL (240 aa)) folds into the ABC transporter domain. 38–45 (GLSGAGKS) is an ATP binding site.

This sequence belongs to the ABC transporter superfamily. Methionine importer (TC 3.A.1.24) family. As to quaternary structure, the complex is composed of two ATP-binding proteins (MetN), two transmembrane proteins (MetI) and a solute-binding protein (MetQ).

Its subcellular location is the cell inner membrane. It catalyses the reaction L-methionine(out) + ATP + H2O = L-methionine(in) + ADP + phosphate + H(+). The catalysed reaction is D-methionine(out) + ATP + H2O = D-methionine(in) + ADP + phosphate + H(+). Part of the ABC transporter complex MetNIQ involved in methionine import. Responsible for energy coupling to the transport system. This Chromohalobacter salexigens (strain ATCC BAA-138 / DSM 3043 / CIP 106854 / NCIMB 13768 / 1H11) protein is Methionine import ATP-binding protein MetN.